A 25-amino-acid polypeptide reads, in one-letter code: Small ribosomal subunit protein eS32 (25 aa).

The interval 1 to 25 (MRAKWRKKRMRRLKRKRRKMRQRSK) is disordered.

It belongs to the eukaryotic ribosomal protein eS32 family. As to quaternary structure, component of the large ribosomal subunit.

The protein resides in the cytoplasm. In terms of biological role, component of the small ribosomal subunit. The ribosome is a large ribonucleoprotein complex responsible for the synthesis of proteins in the cell. The protein is Small ribosomal subunit protein eS32 (rpl41) of Cyprinus carpio (Common carp).